The following is a 338-amino-acid chain: GTPase Obg (338 aa).

Residues 1-159 (MQFIDEVKIH…RWLRLELKLM (159 aa)) form the Obg domain. The disordered stretch occupies residues 66-91 (KAGRGKNGMGKDRHGANGDDLTIPVP). One can recognise an OBG-type G domain in the interval 160-331 (ADVGLLGFPN…LLDEIARHLW (172 aa)). GTP-binding positions include 166 to 173 (GFPNVGKS), 191 to 195 (FTTIK), 213 to 216 (DIPG), 283 to 286 (NKID), and 312 to 314 (SAA). Mg(2+) contacts are provided by Ser173 and Thr193.

It belongs to the TRAFAC class OBG-HflX-like GTPase superfamily. OBG GTPase family. In terms of assembly, monomer. It depends on Mg(2+) as a cofactor.

The protein localises to the cytoplasm. An essential GTPase which binds GTP, GDP and possibly (p)ppGpp with moderate affinity, with high nucleotide exchange rates and a fairly low GTP hydrolysis rate. Plays a role in control of the cell cycle, stress response, ribosome biogenesis and in those bacteria that undergo differentiation, in morphogenesis control. This Geobacter metallireducens (strain ATCC 53774 / DSM 7210 / GS-15) protein is GTPase Obg.